The following is a 199-amino-acid chain: N-(5'-phosphoribosyl)anthranilate isomerase (199 aa).

The protein belongs to the TrpF family.

It carries out the reaction N-(5-phospho-beta-D-ribosyl)anthranilate = 1-(2-carboxyphenylamino)-1-deoxy-D-ribulose 5-phosphate. It functions in the pathway amino-acid biosynthesis; L-tryptophan biosynthesis; L-tryptophan from chorismate: step 3/5. The protein is N-(5'-phosphoribosyl)anthranilate isomerase of Campylobacter jejuni subsp. jejuni serotype O:6 (strain 81116 / NCTC 11828).